We begin with the raw amino-acid sequence, 288 residues long: Programmed cell death protein 1 (288 aa).

The N-terminal stretch at 1-24 (MWVRQVPWSFTWAVLQLSWQSGWL) is a signal peptide. Residues 25 to 169 (LEVPNGPWRS…PKPEGRFQGM (145 aa)) are Extracellular-facing. Residues 31-139 (PWRSLTFYPA…PKAKIEESPG (109 aa)) enclose the Ig-like V-type domain. 4 N-linked (GlcNAc...) asparagine glycosylation sites follow: Asn49, Asn58, Asn74, and Asn116. Cys54 and Cys123 are oxidised to a cystine. Residues 70 to 77 (LSPSNQTE) form an interaction with CD274/PDCD1L1 region. A helical membrane pass occupies residues 170-190 (VIGIMSALVGIPVLLLLAWAL). Topologically, residues 191 to 288 (AVFCSTSMSE…HEDGHCSWPL (98 aa)) are cytoplasmic. Residues 223–228 (VAYEEL) carry the ITIM motif motif. Position 225 is a phosphotyrosine (Tyr225). A Glycyl lysine isopeptide (Lys-Gly) (interchain with G-Cter in ubiquitin) cross-link involves residue Lys235. Phosphothreonine; by MAPK3 is present on Thr236. An ITSM motif motif is present at residues 247 to 251 (EYATI). At Tyr248 the chain carries Phosphotyrosine. Residues 263 to 288 (GRRGSADGLQGPRPPRHEDGHCSWPL) form a disordered region. Residues 277-288 (PRHEDGHCSWPL) show a composition bias toward basic and acidic residues.

Monomer. Interacts with CD274/PDCD1L1. Interacts with CD273/PDCD1LG2. Interacts with FBXO38; leading to ubiquitination and degradation by the proteasome. In terms of processing, ubiquitinated at Lys-235 by the SCF(FBXO38) complex, leading to its proteasomal degradation. Ubiquitinated via 'Lys-48'-linked polyubiquitin chains. Deubiquitinated and thus stabilized by USP5. Tyrosine phosphorylated at Tyr-225 (within ITIM motif) and Tyr-248 (ITSM motif) upon ligand binding. Phosphorylation at Tyr-248 promotes the recruitment of the protein tyrosine phosphatase PTPN11/SHP-2 that mediates dephosphorylation of key TCR proximal signaling molecules, such as ZAP70, PRKCQ/PKCtheta and CD247/CD3zeta. Phosphorylation at Thr-236 promotes the recruitment of the deubiquitinase USP5. Thymus-specific.

It is found in the cell membrane. Inhibitory receptor on antigen activated T-cells that plays a critical role in induction and maintenance of immune tolerance to self. Delivers inhibitory signals upon binding to ligands, such as CD274/PDCD1L1 and CD273/PDCD1LG2. Following T-cell receptor (TCR) engagement, PDCD1 associates with CD3-TCR in the immunological synapse and directly inhibits T-cell activation. Suppresses T-cell activation through the recruitment of PTPN11/SHP-2: following ligand-binding, PDCD1 is phosphorylated within the ITSM motif, leading to the recruitment of the protein tyrosine phosphatase PTPN11/SHP-2 that mediates dephosphorylation of key TCR proximal signaling molecules, such as ZAP70, PRKCQ/PKCtheta and CD247/CD3zeta. The PDCD1-mediated inhibitory pathway is exploited by tumors to attenuate anti-tumor immunity and facilitate tumor survival. This chain is Programmed cell death protein 1, found in Mus musculus (Mouse).